A 181-amino-acid polypeptide reads, in one-letter code: Protein Syd (181 aa).

Belongs to the Syd family.

It localises to the cell inner membrane. In terms of biological role, interacts with the SecY protein in vivo. May bind preferentially to an uncomplexed state of SecY, thus functioning either as a chelating agent for excess SecY in the cell or as a regulatory factor that negatively controls the translocase function. The chain is Protein Syd from Escherichia coli O81 (strain ED1a).